The primary structure comprises 142 residues: Large ribosomal subunit protein uL13 (142 aa).

It belongs to the universal ribosomal protein uL13 family. Part of the 50S ribosomal subunit.

In terms of biological role, this protein is one of the early assembly proteins of the 50S ribosomal subunit, although it is not seen to bind rRNA by itself. It is important during the early stages of 50S assembly. This chain is Large ribosomal subunit protein uL13, found in Ruthia magnifica subsp. Calyptogena magnifica.